The sequence spans 580 residues: (3S,6E)-nerolidol synthase 1, chloroplastic (580 aa).

The N-terminal 31 residues, 1-31, are a transit peptide targeting the chloroplast; the sequence is MASSSWAFFKVFNPQIAPKSISHIGQSDLMQ. Asp-334, Asp-338, Asp-478, Ser-482, and Glu-486 together coordinate Mg(2+). The short motif at 334–338 is the DDXXD motif element; sequence DDIFD.

This sequence belongs to the terpene synthase family. Tpsg subfamily. The cofactor is Mg(2+). It depends on Mn(2+) as a cofactor.

Its subcellular location is the plastid. The protein resides in the chloroplast. The catalysed reaction is (2E,6E)-farnesyl diphosphate + H2O = (3S,6E)-nerolidol + diphosphate. Its pathway is secondary metabolite biosynthesis; terpenoid biosynthesis. In terms of biological role, involved in monoterpene (C10) and sesquiterpene (C15) biosynthesis. Converts geranyl diphosphate (GPP) into S-linalool and farnesyl diphosphate (FPP) into (3S)-E-nerolidol. Probably not expressed in wild strawberry species. The polypeptide is (3S,6E)-nerolidol synthase 1, chloroplastic (Fragaria vesca (Woodland strawberry)).